Here is a 635-residue protein sequence, read N- to C-terminus: MNVIKSRRPAVSPEIDPSTLSNYQNFAVSNTELFLDVLFDEKIVAGTVLYHLEVLNKDVSEVILDTSFLTVESVTVNGSEAEFSLHERVEPLGSRLAISIPPNSQKVQLFISFRTTERCTAIQFLDKEATDGKKAPYLFCQCQAIHARSLFPCFDTPALKSTYKLSAKSPLFTLMSGRPVNQEGDMYYFDQPVPIPSYLISIASGDIVKAKIGPRSDIYSEPVKIKDCQWEFENDMEDFIQIAEKLVFEYEWLRFDSLVLPSSFPYGGMEIPNLCQLTPTLICKDRSQVTVMAHELAHSWSGNLVTNCSWEHFWLNEGWTVYIERRIIEGIATAEAIKAGKKDPFAYGESMRHFSAIIGWNDLENSIKAMGNDAERFSPLVLDLKAGEDPDDSFSTVPYEKGFNLLFLIEQTVGGKKVFDKFIPSYFKKFRYGSLDTYQFVDYLYEFFNDKKVELDSIDWESWLYKPGMPPVMPKFDTTLADECYELADEWFSAIKNNSYLKHDFSSADIKSFEPNQSVVFLDTLISYNKHKDFNWKDHVDALKLMETAYTEYDTSLNAEILFRWYMLQVSGEREEFQHKLGQWLGTVGRMKFVRPGYVLLNEVNRELAIYYFKKFESNYHPICKTMVKKDLGLV.

Residues 141-143 and 265-270 each bind substrate; these read QCQ and PYGGME. Position 294 (His-294) interacts with Zn(2+). Residue Glu-295 is the Proton acceptor of the active site. Residues His-298 and Glu-317 each contribute to the Zn(2+) site. The active-site Proton donor is the Tyr-399.

Belongs to the peptidase M1 family. The cofactor is Zn(2+).

The protein resides in the cytoplasm. It localises to the nucleus. It carries out the reaction an epoxide + H2O = an ethanediol. Functionally, aminopeptidase that preferentially cleaves di- and tripeptides. Also has low epoxide hydrolase activity (in vitro). Can hydrolyze the epoxide leukotriene LTA(4) but it forms preferentially 5,6-dihydroxy-7,9,11,14-eicosatetraenoic acid rather than the cytokine leukotriene B(4) as the product compared to the homologous mammalian enzyme (in vitro). The chain is Leucine aminopeptidase 2-2 (LTA4) from Scheffersomyces stipitis (strain ATCC 58785 / CBS 6054 / NBRC 10063 / NRRL Y-11545) (Yeast).